The primary structure comprises 1581 residues: Mediator of RNA polymerase II transcription subunit 1 (1581 aa).

Positions methionine 1 to asparagine 670 are interaction with the Mediator complex and THRA. Residues methionine 16–glycine 590 are interaction with ESR1. Interaction with the Mediator complex stretches follow at residues phenylalanine 108–threonine 212 and serine 215–glycine 390. The segment at proline 405–methionine 644 is interaction with THRA. The interaction with VDR stretch occupies residues proline 542 to glutamate 788. Serine 588 bears the Phosphoserine mark. Positions leucine 604–leucine 608 match the LXXLL motif 1 motif. 4 disordered regions span residues glutamine 609–glutamate 705, lysine 791–leucine 819, leucine 868–lysine 895, and glutamate 947–isoleucine 1566. Residues proline 622–valine 632 show a composition bias toward pro residues. Residues proline 622 to lysine 701 form an interaction with PPARGC1A and THRA region. The LXXLL motif 2 signature appears at leucine 645–leucine 649. Positions glutamine 655 to serine 675 are enriched in polar residues. The interaction with ESR1 stretch occupies residues aspartate 656–glutamine 1065. Residue serine 664 is modified to Phosphoserine. The interaction with GATA1 stretch occupies residues cysteine 681–methionine 715. Residues lysine 690–glutamate 705 show a composition bias toward basic and acidic residues. Residue serine 794 is modified to Phosphoserine. Threonine 804 is modified (phosphothreonine). Over residues arginine 807–leucine 819 the composition is skewed to polar residues. Positions glutamine 874–alanine 901 match the Integrase domain-binding motif (IBM) motif. Phosphoserine is present on residues serine 886 and serine 952. Residues leucine 962 to glutamate 973 show a composition bias toward basic and acidic residues. At threonine 1031 the chain carries Phosphothreonine; by MAPK1 or MAPK3. Residues proline 1033–threonine 1050 are compositionally biased toward low complexity. A phosphothreonine mark is found at threonine 1050 and threonine 1056. 3 stretches are compositionally biased toward low complexity: residues serine 1077–serine 1093, serine 1100–serine 1111, and serine 1119–serine 1156. Serine 1156 is modified (phosphoserine). A compositionally biased stretch (polar residues) spans glycine 1162 to histidine 1195. Lysine 1177 bears the N6-acetyllysine mark. Phosphoserine is present on serine 1207. Residue threonine 1215 is modified to Phosphothreonine. Composition is skewed to low complexity over residues serine 1218–serine 1227 and methionine 1234–lysine 1293. Phosphoserine is present on serine 1223. Residues leucine 1249–leucine 1421 are interaction with TP53. Residue serine 1302 is modified to Phosphoserine. Over residues glycine 1330–asparagine 1345 the composition is skewed to polar residues. At serine 1347 the chain carries Phosphoserine. Residues glutamine 1352–lysine 1364 show a composition bias toward basic and acidic residues. Residues serine 1403 and serine 1433 each carry the phosphoserine modification. Polar residues-rich tracts occupy residues methionine 1425–threonine 1440 and proline 1448–serine 1482. A Phosphothreonine modification is found at threonine 1440. Threonine 1457 carries the phosphothreonine; by MAPK1 or MAPK3 modification. 5 positions are modified to phosphoserine: serine 1463, serine 1465, serine 1479, serine 1481, and serine 1482. Positions lysine 1496–lysine 1505 are enriched in basic residues. The span at lysine 1506–lysine 1522 shows a compositional bias: basic and acidic residues. An N6-acetyllysine modification is found at lysine 1529. The span at tryptophan 1533–leucine 1552 shows a compositional bias: polar residues.

It belongs to the Mediator complex subunit 1 family. Component of the Mediator complex, which is composed of MED1, MED4, MED6, MED7, MED8, MED9, MED10, MED11, MED12, MED13, MED13L, MED14, MED15, MED16, MED17, MED18, MED19, MED20, MED21, MED22, MED23, MED24, MED25, MED26, MED27, MED29, MED30, MED31, CCNC, CDK8 and CDC2L6/CDK11. The MED12, MED13, CCNC and CDK8 subunits form a distinct module termed the CDK8 module. Mediator containing the CDK8 module is less active than Mediator lacking this module in supporting transcriptional activation. Individual preparations of the Mediator complex lacking one or more distinct subunits have been variously termed ARC, CRSP, DRIP, PC2, SMCC and TRAP. This subunit specifically interacts with a number of nuclear receptors in a ligand-dependent fashion including AR, ESR1, ESR2, PPARA, PPARG, RORA, RXRA, RXRG, THRA, THRB and VDR. Interacts with CTNNB1, GABPA, GLI3, PPARGC1A and TP53. Interacts with GATA1 and YWHAH. Interacts with CLOCK; this interaction requires the presence of THRAP3. Interacts with CCAR1. Interacts with NR4A3. Interacts (via IBM motif) with PSIP1 (via IBD domain); phosphorylation increases its affinity for PSIP1. Interacts with USP22. In terms of processing, phosphorylated by MAPK1 or MAPK3 during G2/M phase which may enhance protein stability and promote entry into the nucleolus. Phosphorylation increases its interaction with PSIP1.

It localises to the nucleus. In terms of biological role, component of the Mediator complex, a coactivator involved in the regulated transcription of nearly all RNA polymerase II-dependent genes. Mediator functions as a bridge to convey information from gene-specific regulatory proteins to the basal RNA polymerase II transcription machinery. Mediator is recruited to promoters by direct interactions with regulatory proteins and serves as a scaffold for the assembly of a functional preinitiation complex with RNA polymerase II and the general transcription factors. Acts as a coactivator for GATA1-mediated transcriptional activation during erythroid differentiation of K562 erythroleukemia cells. The polypeptide is Mediator of RNA polymerase II transcription subunit 1 (MED1) (Pongo abelii (Sumatran orangutan)).